The sequence spans 802 residues: Copper-exporting P-type ATPase (802 aa).

HMA domains lie at 5–70 (KKTT…YGVA) and 72–138 (ETVE…YDAS). Cu(+)-binding residues include Cys16, Cys19, Cys83, and Cys86. 6 consecutive transmembrane segments (helical) span residues 161-181 (LIIS…HLFN), 192-212 (WFQF…FYVG), 224-244 (MDVL…YEMV), 256-276 (LYFE…YLEA), 411-431 (YFVP…ITLV), and 438-458 (PALV…LGLA). Asp495 serves as the catalytic 4-aspartylphosphate intermediate. The Mg(2+) site is built by Asp690 and Asp694. The next 2 membrane-spanning stretches (helical) occupy residues 748–767 (LFWA…LGLL) and 771–790 (VAGA…ALRL).

It belongs to the cation transport ATPase (P-type) (TC 3.A.3) family. Type IB subfamily.

The protein resides in the cell membrane. The catalysed reaction is Cu(+)(in) + ATP + H2O = Cu(+)(out) + ADP + phosphate + H(+). In terms of biological role, involved in copper export. The chain is Copper-exporting P-type ATPase (copA) from Staphylococcus aureus (strain COL).